Here is a 475-residue protein sequence, read N- to C-terminus: Adenosylhomocysteinase (475 aa).

Substrate-binding residues include T61, D140, and E200. 201-203 (TTT) is an NAD(+) binding site. Residues K230 and D234 each contribute to the substrate site. NAD(+) is bound by residues N235, 264-269 (GYGDVG), E287, N322, 343-345 (IGH), and N388.

This sequence belongs to the adenosylhomocysteinase family. NAD(+) serves as cofactor.

It localises to the cytoplasm. The enzyme catalyses S-adenosyl-L-homocysteine + H2O = L-homocysteine + adenosine. It functions in the pathway amino-acid biosynthesis; L-homocysteine biosynthesis; L-homocysteine from S-adenosyl-L-homocysteine: step 1/1. Its function is as follows. May play a key role in the regulation of the intracellular concentration of adenosylhomocysteine. The polypeptide is Adenosylhomocysteinase (Paracidovorax citrulli (strain AAC00-1) (Acidovorax citrulli)).